A 106-amino-acid chain; its full sequence is NADH dehydrogenase [ubiquinone] 1 beta subcomplex subunit 10-B (106 aa).

Positions 1-25 (MGRKKGLPEFEESAPDGFDPENPYK) are disordered.

Belongs to the complex I NDUFB10 subunit family. In terms of assembly, complex I is composed of at least 49 different subunits.

It is found in the mitochondrion inner membrane. Its function is as follows. Accessory subunit of the mitochondrial membrane respiratory chain NADH dehydrogenase (Complex I), that is believed not to be involved in catalysis. Complex I functions in the transfer of electrons from NADH to the respiratory chain. The immediate electron acceptor for the enzyme is believed to be ubiquinone. The polypeptide is NADH dehydrogenase [ubiquinone] 1 beta subcomplex subunit 10-B (Arabidopsis thaliana (Mouse-ear cress)).